A 403-amino-acid chain; its full sequence is MKRERFKPPEPDDPLCCCGDIDQQREYCCCDCEELDDACERLLRGEPDKPDVFSRFISRMADRLGVSCCTVGPLRLELSVLPPMVLIPGLLRVAAINCLLGVIILTALPLLVLWYYYMTHRRKRRTLFFLSLALFSLAYMYYLFLTEIVPRGDVTHLQVVTATTGMMLTLISLVRTKQGPGFVKSQSLALGINSSLATNRSTNLTLDTDLRNGVSHLKGEKDVKKKCPVCQLVRPPRAGHCRICGACVLRMDHHCVWINSCVGQANHRQFILTLLLFLLTSFYGISLVLRSICPKQSLFTAMLYCPGVYNQYSTALCFTCVWYSVIITGGLLHLFILQIINVSCNVTEREAQIALRNKTGRRRFCGLVVETGDHSRGFLQNWIQFLTMNMDEIGSSLNLTDMV.

Residues 1 to 70 (MKRERFKPPE…ADRLGVSCCT (70 aa)) are Cytoplasmic-facing. A helical membrane pass occupies residues 71 to 91 (VGPLRLELSVLPPMVLIPGLL). A topological domain (lumenal) is located at residue Arg92. The helical transmembrane segment at 93–113 (VAAINCLLGVIILTALPLLVL) threads the bilayer. At 114–125 (WYYYMTHRRKRR) the chain is on the cytoplasmic side. The helical transmembrane segment at 126 to 146 (TLFFLSLALFSLAYMYYLFLT) threads the bilayer. At 147–153 (EIVPRGD) the chain is on the lumenal side. A helical transmembrane segment spans residues 154–174 (VTHLQVVTATTGMMLTLISLV). Over 175 to 268 (RTKQGPGFVK…NSCVGQANHR (94 aa)) the chain is Cytoplasmic. One can recognise a DHHC domain in the interval 225–275 (KKCPVCQLVRPPRAGHCRICGACVLRMDHHCVWINSCVGQANHRQFILTLL). The S-palmitoyl cysteine intermediate role is filled by Cys255. Residues 269–289 (QFILTLLLFLLTSFYGISLVL) form a helical membrane-spanning segment. The Lumenal portion of the chain corresponds to 290–319 (RSICPKQSLFTAMLYCPGVYNQYSTALCFT). A helical transmembrane segment spans residues 320 to 340 (CVWYSVIITGGLLHLFILQII). Residues 341 to 403 (NVSCNVTERE…GSSLNLTDMV (63 aa)) lie on the Cytoplasmic side of the membrane.

Belongs to the DHHC palmitoyltransferase family.

The protein resides in the golgi apparatus membrane. Its subcellular location is the golgi apparatus. The protein localises to the trans-Golgi network membrane. It catalyses the reaction L-cysteinyl-[protein] + hexadecanoyl-CoA = S-hexadecanoyl-L-cysteinyl-[protein] + CoA. Its function is as follows. Palmitoyltransferase that could catalyze the addition of palmitate onto various protein substrates and be involved in a variety of cellular processes. The chain is Palmitoyltransferase ZDHHC23-A (zdhhc23a) from Danio rerio (Zebrafish).